A 266-amino-acid chain; its full sequence is Thiazole synthase (266 aa).

Lys-95 serves as the catalytic Schiff-base intermediate with DXP. 1-deoxy-D-xylulose 5-phosphate is bound by residues Gly-156, 182–183 (AG), and 204–205 (NT).

This sequence belongs to the ThiG family. Homotetramer. Forms heterodimers with either ThiH or ThiS.

Its subcellular location is the cytoplasm. The enzyme catalyses [ThiS sulfur-carrier protein]-C-terminal-Gly-aminoethanethioate + 2-iminoacetate + 1-deoxy-D-xylulose 5-phosphate = [ThiS sulfur-carrier protein]-C-terminal Gly-Gly + 2-[(2R,5Z)-2-carboxy-4-methylthiazol-5(2H)-ylidene]ethyl phosphate + 2 H2O + H(+). Its pathway is cofactor biosynthesis; thiamine diphosphate biosynthesis. Its function is as follows. Catalyzes the rearrangement of 1-deoxy-D-xylulose 5-phosphate (DXP) to produce the thiazole phosphate moiety of thiamine. Sulfur is provided by the thiocarboxylate moiety of the carrier protein ThiS. In vitro, sulfur can be provided by H(2)S. This is Thiazole synthase from Shewanella denitrificans (strain OS217 / ATCC BAA-1090 / DSM 15013).